We begin with the raw amino-acid sequence, 204 residues long: ATP phosphoribosyltransferase (204 aa).

Belongs to the ATP phosphoribosyltransferase family. Short subfamily. As to quaternary structure, heteromultimer composed of HisG and HisZ subunits.

Its subcellular location is the cytoplasm. It catalyses the reaction 1-(5-phospho-beta-D-ribosyl)-ATP + diphosphate = 5-phospho-alpha-D-ribose 1-diphosphate + ATP. It functions in the pathway amino-acid biosynthesis; L-histidine biosynthesis; L-histidine from 5-phospho-alpha-D-ribose 1-diphosphate: step 1/9. Functionally, catalyzes the condensation of ATP and 5-phosphoribose 1-diphosphate to form N'-(5'-phosphoribosyl)-ATP (PR-ATP). Has a crucial role in the pathway because the rate of histidine biosynthesis seems to be controlled primarily by regulation of HisG enzymatic activity. This Staphylococcus aureus (strain MRSA252) protein is ATP phosphoribosyltransferase.